We begin with the raw amino-acid sequence, 690 residues long: Proprotein convertase subtilisin/kexin type 9 (690 aa).

An N-terminal signal peptide occupies residues 1-28 (MGTVSSRRSWWPLPLLLLLLLGPAGARA). Positions 29 to 150 (QEDEDGDYEE…IEEDSSVFAQ (122 aa)) are excised as a propeptide. Tyr-36 carries the sulfotyrosine modification. Residue Ser-45 is modified to Phosphoserine. In terms of domain architecture, Inhibitor I9 spans 75-147 (TYVVVLKEET…VDYIEEDSSV (73 aa)). Residues 153-459 (PWNLERITPP…GWQLFCRTVW (307 aa)) enclose the Peptidase S8 domain. Catalysis depends on charge relay system residues Asp-184 and His-224. 2 disulfide bridges follow: Cys-221/Cys-253 and Cys-321/Cys-356. Ser-384 serves as the catalytic Charge relay system. Positions 448 to 690 (GAGWQLFCRT…HLAQASQELQ (243 aa)) are C-terminal domain. 3 cysteine pairs are disulfide-bonded: Cys-455/Cys-525, Cys-475/Cys-524, and Cys-484/Cys-507. N-linked (GlcNAc...) asparagine glycosylation occurs at Asn-531. Disulfide bonds link Cys-532/Cys-599, Cys-550/Cys-598, Cys-560/Cys-586, Cys-606/Cys-677, Cys-624/Cys-676, and Cys-633/Cys-652. Phosphoserine is present on Ser-686.

The protein belongs to the peptidase S8 family. Monomer. Can self-associate to form dimers and higher multimers which may have increased LDLR degrading activity. The precursor protein but not the mature protein may form multimers. Interacts with APOB, VLDLR, LRP8/APOER2 and BACE1. The full-length immature form (pro-PCSK9) interacts with SCNN1A, SCNN1B and SCNN1G. The pro-PCSK9 form (via C-terminal domain) interacts with LDLR. Interacts (via the C-terminal domain) with ANXA2 (via repeat Annexin 1); the interaction inhibits the degradation of LDLR. Ca(2+) is required as a cofactor. Cleavage by furin and PCSK5 generates a truncated inactive protein that is unable to induce LDLR degradation. In terms of processing, undergoes autocatalytic cleavage in the endoplasmic reticulum to release the propeptide from the N-terminus and the cleavage of the propeptide is strictly required for its maturation and activation. The cleaved propeptide however remains associated with the catalytic domain through non-covalent interactions, preventing potential substrates from accessing its active site. As a result, it is secreted from cells as a propeptide-containing, enzymatically inactive protein. Post-translationally, phosphorylation protects the propeptide against proteolysis.

The protein resides in the cytoplasm. It is found in the secreted. Its subcellular location is the endosome. The protein localises to the lysosome. It localises to the cell surface. The protein resides in the endoplasmic reticulum. It is found in the golgi apparatus. Its activity is regulated as follows. Its proteolytic activity is autoinhibited by the non-covalent binding of the propeptide to the catalytic domain. Inhibited by EGTA. Its function is as follows. Crucial player in the regulation of plasma cholesterol homeostasis. Binds to low-density lipid receptor family members: low density lipoprotein receptor (LDLR), very low density lipoprotein receptor (VLDLR), apolipoprotein E receptor (LRP1/APOER) and apolipoprotein receptor 2 (LRP8/APOER2), and promotes their degradation in intracellular acidic compartments. Acts via a non-proteolytic mechanism to enhance the degradation of the hepatic LDLR through a clathrin LDLRAP1/ARH-mediated pathway. May prevent the recycling of LDLR from endosomes to the cell surface or direct it to lysosomes for degradation. Can induce ubiquitination of LDLR leading to its subsequent degradation. Inhibits intracellular degradation of APOB via the autophagosome/lysosome pathway in a LDLR-independent manner. Involved in the disposal of non-acetylated intermediates of BACE1 in the early secretory pathway. Inhibits epithelial Na(+) channel (ENaC)-mediated Na(+) absorption by reducing ENaC surface expression primarily by increasing its proteasomal degradation. Regulates neuronal apoptosis via modulation of LRP8/APOER2 levels and related anti-apoptotic signaling pathways. The sequence is that of Proprotein convertase subtilisin/kexin type 9 (PCSK9) from Pongo pygmaeus (Bornean orangutan).